Consider the following 133-residue polypeptide: Small ribosomal subunit protein uS8 (133 aa).

This sequence belongs to the universal ribosomal protein uS8 family. In terms of assembly, part of the 30S ribosomal subunit. Contacts proteins S5 and S12.

In terms of biological role, one of the primary rRNA binding proteins, it binds directly to 16S rRNA central domain where it helps coordinate assembly of the platform of the 30S subunit. In Koribacter versatilis (strain Ellin345), this protein is Small ribosomal subunit protein uS8.